Consider the following 379-residue polypeptide: Probable pectin lyase B (379 aa).

The signal sequence occupies residues 1 to 20 (MHYKLLFAAAAASLASAVSA). 2 disulfides stabilise this stretch: Cys-83–Cys-102 and Cys-92–Cys-226. N-linked (GlcNAc...) asparagine glycosylation is found at Asn-129 and Asn-252. Arg-256 is a catalytic residue. Cys-323 and Cys-331 are disulfide-bonded.

Belongs to the polysaccharide lyase 1 family.

Its subcellular location is the secreted. The catalysed reaction is Eliminative cleavage of (1-&gt;4)-alpha-D-galacturonan methyl ester to give oligosaccharides with 4-deoxy-6-O-methyl-alpha-D-galact-4-enuronosyl groups at their non-reducing ends.. In terms of biological role, pectinolytic enzymes consist of four classes of enzymes: pectin lyase, polygalacturonase, pectin methylesterase and rhamnogalacturonase. Among pectinolytic enzymes, pectin lyase is the most important in depolymerization of pectin, since it cleaves internal glycosidic bonds of highly methylated pectins. The polypeptide is Probable pectin lyase B (pelB) (Aspergillus niger (strain ATCC MYA-4892 / CBS 513.88 / FGSC A1513)).